A 446-amino-acid chain; its full sequence is CBL-interacting protein kinase 8 (446 aa).

In terms of domain architecture, Protein kinase spans 13 to 266 (YEVGRTIGEG…IEEIRNDEWF (254 aa)). ATP is bound by residues 19 to 27 (IGEGTFAKV) and Lys-42. The Proton acceptor role is filled by Asp-136. The segment at 154 to 181 (DFGLSAWPAQGGALLRTTCGTPNYVAPE) is activation loop. Residues 301 to 329 (LDDEAGPLTLNAFDLIILSQGLNLAALFD) enclose the NAF domain. The segment at 336–365 (KLQNRFLSRKPAKVIMSSMEVVAQSMGYKT) is PPI.

Belongs to the protein kinase superfamily. CAMK Ser/Thr protein kinase family. SNF1 subfamily. The cofactor is Mn(2+).

It catalyses the reaction L-seryl-[protein] + ATP = O-phospho-L-seryl-[protein] + ADP + H(+). It carries out the reaction L-threonyl-[protein] + ATP = O-phospho-L-threonyl-[protein] + ADP + H(+). Functionally, CIPK serine-threonine protein kinases interact with CBL proteins. Binding of a CBL protein to the regulatory NAF domain of CIPK protein lead to the activation of the kinase in a calcium-dependent manner. This chain is CBL-interacting protein kinase 8 (CIPK8), found in Oryza sativa subsp. japonica (Rice).